Consider the following 503-residue polypeptide: Protein O-glucosyltransferase 3 (503 aa).

The signal sequence occupies residues 1–19 (MQALPLGLQLALLVAAGAG). A Filamin repeat occupies 19–129 (GARVSAPRSL…VAHSPYILKG (111 aa)). N56 and N302 each carry an N-linked (GlcNAc...) asparagine glycan. The Prevents secretion from ER signature appears at 500–503 (REEL).

Belongs to the KDELC family.

It is found in the endoplasmic reticulum lumen. The catalysed reaction is L-seryl-[EGF-like domain protein] + UDP-alpha-D-glucose = 3-O-(beta-D-glucosyl)-L-seryl-[EGF-like domain protein] + UDP + H(+). It catalyses the reaction L-seryl-[EGF-like domain protein] + UDP-alpha-D-xylose = 3-O-(beta-D-xylosyl)-L-seryl-[EGF-like domain protein] + UDP + H(+). Its pathway is protein modification; protein glycosylation. Protein glucosyltransferase that catalyzes the transfer of glucose from UDP-glucose to a serine residue within the consensus sequence peptide C-X-N-T-X-G-S-F-X-C. Can also catalyze the transfer of xylose from UDP-xylose but less efficiently. Specifically targets extracellular EGF repeats of proteins such as NOTCH1, NOTCH3, FBN1, FBN2 and LTBP1. May regulate the transport of NOTCH1 and NOTCH3 to the plasma membrane and thereby the Notch signaling pathway. This chain is Protein O-glucosyltransferase 3 (Poglut3), found in Mus musculus (Mouse).